A 527-amino-acid chain; its full sequence is MSDLLSRRLALLGAAANLPLLTECLHGIERECLRVDSDGKLALTPHPRALGSTLTHPQITTDYSEALLEFITPTETDVADTLADLERIHRFASSKLDGEYLWSPSMPCELPDEESIPIARYGSSLIGRLKYVYRKGLALRYGKTMQCIAGIHYNFSLPERLWPLLRQAEGSELSERDYQSAAYIALIRNFRRYSWLLMYLFGASPALDAGFLRGRPSQLERLDEHTLYLPYATSLRMSDLGYQNNAQAGLTPCYNDLQSYIDSLRQAVSTPYPPYEKVGTKQDGEWVQLNTNILQIENEYYSSIRPKRVTYTGERPVQALAARGVQYVEVRCLDINPFLPLGIDLDEARFLDAFLLFCAFSDSPLLNGECSDATDNFLAVVKEGRRPGLQLQRRGQPVELQVWANELLERIADTAALLDRARGGEAHAAALAAQRAKVADAELTPSAQVLKVMRERGESFEAFSLRQSREHAEYFRQHPLAAEEQARFEKMASDSLAEQTELERDQDGDFDTFVAAYQASILGLISN.

The protein belongs to the glutamate--cysteine ligase type 1 family. Type 1 subfamily.

The enzyme catalyses L-cysteine + L-glutamate + ATP = gamma-L-glutamyl-L-cysteine + ADP + phosphate + H(+). The protein operates within sulfur metabolism; glutathione biosynthesis; glutathione from L-cysteine and L-glutamate: step 1/2. The polypeptide is Glutamate--cysteine ligase (Pseudomonas aeruginosa (strain LESB58)).